Here is a 220-residue protein sequence, read N- to C-terminus: uncharacterized protein (220 aa).

Positions 1-50 (MTDDVRDVNTETTDATEVAEIDSAAGEAGDSATEAFDTDSATESTAQKGQ) are disordered. The span at 39-48 (DSATESTAQK) shows a compositional bias: polar residues. A helical membrane pass occupies residues 65–85 (VPVILILLMLISGGATGWLYL).

This sequence to M.tuberculosis Rv1363c.

Its subcellular location is the membrane. This is an uncharacterized protein from Mycobacterium tuberculosis (strain CDC 1551 / Oshkosh).